The primary structure comprises 163 residues: MELTHFDEEGRARMVDVSAKAETTRVATARGKVEMQAETLERIRSGQIAKGDVLAVAQVAGIMAAKQTSNVIPMCHPLAITGAKLNFEIVPPGTIEIEGIVKVTGKTGVEMEALTAVSVAALTIYDMCKAIDKTMVISDIRLMEKTGGKSGHFIREDHLKSTT.

Residues 74–76 and 111–112 each bind substrate; these read MCH and ME. Asp-126 is a catalytic residue.

This sequence belongs to the MoaC family. Homohexamer; trimer of dimers.

The enzyme catalyses (8S)-3',8-cyclo-7,8-dihydroguanosine 5'-triphosphate = cyclic pyranopterin phosphate + diphosphate. It functions in the pathway cofactor biosynthesis; molybdopterin biosynthesis. Functionally, catalyzes the conversion of (8S)-3',8-cyclo-7,8-dihydroguanosine 5'-triphosphate to cyclic pyranopterin monophosphate (cPMP). This Desulfitobacterium hafniense (strain DSM 10664 / DCB-2) protein is Cyclic pyranopterin monophosphate synthase.